The following is a 579-amino-acid chain: Glutamine--tRNA ligase (579 aa).

Positions 41–51 (PEPNGYLHIGH) match the 'HIGH' region motif. ATP contacts are provided by residues 42-44 (EPN) and 48-54 (HIGHAKA). 2 residues coordinate L-glutamine: Asp-74 and Tyr-218. Residues Thr-237, 285 to 286 (RL), and 293 to 295 (MSK) each bind ATP. The short motif at 292–296 (VMSKR) is the 'KMSKS' region element.

This sequence belongs to the class-I aminoacyl-tRNA synthetase family. Monomer.

It localises to the cytoplasm. The enzyme catalyses tRNA(Gln) + L-glutamine + ATP = L-glutaminyl-tRNA(Gln) + AMP + diphosphate. In Xanthomonas axonopodis pv. citri (strain 306), this protein is Glutamine--tRNA ligase.